The primary structure comprises 185 residues: Elongation factor P (185 aa).

It belongs to the elongation factor P family.

It is found in the cytoplasm. It functions in the pathway protein biosynthesis; polypeptide chain elongation. In terms of biological role, involved in peptide bond synthesis. Stimulates efficient translation and peptide-bond synthesis on native or reconstituted 70S ribosomes in vitro. Probably functions indirectly by altering the affinity of the ribosome for aminoacyl-tRNA, thus increasing their reactivity as acceptors for peptidyl transferase. This chain is Elongation factor P, found in Nostoc punctiforme (strain ATCC 29133 / PCC 73102).